Here is a 258-residue protein sequence, read N- to C-terminus: Diacetyl reductase [(S)-acetoin forming] (258 aa).

8 to 32 (LVTGGAQGIGFKIAERLVEDGFKVA) provides a ligand contact to NAD(+). S141 provides a ligand contact to substrate. Catalysis depends on Y154, which acts as the Proton acceptor. K158 is an active-site residue.

The protein belongs to the short-chain dehydrogenases/reductases (SDR) family.

The enzyme catalyses (S)-acetoin + NAD(+) = diacetyl + NADH + H(+). Its function is as follows. Catalyzes the irreversible reduction of 2,3-butanediol to (S)-acetoin in the presence of NADH. This chain is Diacetyl reductase [(S)-acetoin forming] (butA), found in Staphylococcus aureus (strain Mu50 / ATCC 700699).